The following is a 1388-amino-acid chain: Dicer-like protein 2 (1388 aa).

Positions 23 to 203 (MLEASMKENI…LLTVESNLDA (181 aa)) constitute a Helicase ATP-binding domain. 36–43 (MDTGSGKT) serves as a coordination point for ATP. Positions 144 to 147 (DEAH) match the DEAH box motif. Residues 371 to 537 (SLLNFLDSLD…DDERQLQSVS (167 aa)) enclose the Helicase C-terminal domain. The 95-residue stretch at 564–658 (AMAHLHHFCA…LPLTKRPELK (95 aa)) folds into the Dicer dsRNA-binding fold domain. RNase III domains follow at residues 919–1059 (ATRL…MDGG) and 1098–1281 (NERL…VDSG). Glutamate 1137, aspartate 1267, and glutamate 1270 together coordinate Mg(2+).

This sequence belongs to the helicase family. Dicer subfamily. Requires Mg(2+) as cofactor. Mn(2+) serves as cofactor.

In terms of biological role, dicer-like endonuclease involved in cleaving double-stranded RNA in the RNA interference (RNAi) pathway. Produces 21 to 25 bp dsRNAs (siRNAs) which target the selective destruction of homologous RNAs leading to sequence-specific suppression of gene expression, called post-transcriptional gene silencing (PTGS). Part of a broad host defense response against viral infection and transposons. The chain is Dicer-like protein 2 (dcl2) from Neosartorya fischeri (strain ATCC 1020 / DSM 3700 / CBS 544.65 / FGSC A1164 / JCM 1740 / NRRL 181 / WB 181) (Aspergillus fischerianus).